A 347-amino-acid chain; its full sequence is GMP reductase (347 aa).

Position 108-131 (108-131) interacts with NADP(+); the sequence is ADFAKTAQILALNPALNFVCIDVA. K(+)-binding residues include glycine 181 and glycine 183. Cysteine 186 serves as the catalytic Thioimidate intermediate. 216–239 serves as a coordination point for NADP(+); it reads IVSDGGCTMPGDVAKAFGGGADFV.

Belongs to the IMPDH/GMPR family. GuaC type 1 subfamily. As to quaternary structure, homotetramer.

The enzyme catalyses IMP + NH4(+) + NADP(+) = GMP + NADPH + 2 H(+). In terms of biological role, catalyzes the irreversible NADPH-dependent deamination of GMP to IMP. It functions in the conversion of nucleobase, nucleoside and nucleotide derivatives of G to A nucleotides, and in maintaining the intracellular balance of A and G nucleotides. The polypeptide is GMP reductase (Salmonella arizonae (strain ATCC BAA-731 / CDC346-86 / RSK2980)).